We begin with the raw amino-acid sequence, 122 residues long: MARLAGVDLPRNKRMEVALTYIYGIGPARSKQLLEETGISPDLRTDNLTDEQIAALRDVIEGTWKVEGDLRRQVQADIRRKIEIGCYQGIRHRRGLPVRGQRTKTNARTRKGPKKTIAGKKK.

The segment at 95-122 is disordered; sequence GLPVRGQRTKTNARTRKGPKKTIAGKKK.

Belongs to the universal ribosomal protein uS13 family. As to quaternary structure, part of the 30S ribosomal subunit. Forms a loose heterodimer with protein S19. Forms two bridges to the 50S subunit in the 70S ribosome.

Located at the top of the head of the 30S subunit, it contacts several helices of the 16S rRNA. In the 70S ribosome it contacts the 23S rRNA (bridge B1a) and protein L5 of the 50S subunit (bridge B1b), connecting the 2 subunits; these bridges are implicated in subunit movement. Contacts the tRNAs in the A and P-sites. The polypeptide is Small ribosomal subunit protein uS13 (Corynebacterium glutamicum (strain ATCC 13032 / DSM 20300 / JCM 1318 / BCRC 11384 / CCUG 27702 / LMG 3730 / NBRC 12168 / NCIMB 10025 / NRRL B-2784 / 534)).